A 260-amino-acid chain; its full sequence is UPF0246 protein BceJ2315_22780 (260 aa).

This sequence belongs to the UPF0246 family.

The polypeptide is UPF0246 protein BceJ2315_22780 (Burkholderia cenocepacia (strain ATCC BAA-245 / DSM 16553 / LMG 16656 / NCTC 13227 / J2315 / CF5610) (Burkholderia cepacia (strain J2315))).